Consider the following 273-residue polypeptide: UPF0173 metal-dependent hydrolase Bpro_4324 (273 aa).

It belongs to the UPF0173 family.

This is UPF0173 metal-dependent hydrolase Bpro_4324 from Polaromonas sp. (strain JS666 / ATCC BAA-500).